The chain runs to 653 residues: Fusexin 1 (653 aa).

An N-terminal signal peptide occupies residues 1 to 24 (MKRVGNCWKASVAAFFLLMFTAFA). The Extracellular segment spans residues 25 to 559 (AADTTSVDTV…FENIWSGDAN (535 aa)). Cystine bridges form between C129–C167, C398–C441, C468–C487, and C499–C516. The fusion loop stretch occupies residues 155–160 (DYWTGS). The chain crosses the membrane as a helical span at residues 560–580 (ALNWLQVFVTFIAFLGGFALV). Topologically, residues 581-604 (GVKLGKIVDGLATEFIPVKDSHVR) are cytoplasmic. Helical transmembrane passes span 605 to 625 (LVIGLLGGGMIATAVYQLVTD) and 626 to 646 (PLGLLVTVLGLVVMGYLYLSA). Over 647–653 (SAPEINL) the chain is Cytoplasmic.

The protein belongs to the HAP2/GCS1 family. Fusexin 1 subfamily. Homotrimer stabilized by interdomain contacts and numerous Ca(2+) and Na(+) ions.

It is found in the cell surface. It localises to the cell membrane. Exhibits fusogenic activity. Mediates cell-cell fusion in mammalian cells (bilateral fusion). The chain is Fusexin 1 from Haloplanus natans (strain DSM 17983 / JCM 14081 / CGMCC 1.8972 / RE-101).